The chain runs to 131 residues: MRHRHGLRKLNRTSSHRLAMLRNMSNSLIEHEVIKTTLPKAKELRKVVEPLITLGKKPSLANRRLAFNRLRDRDSVAKLFDVLGPRFANRPGGYLRILKFGFRVGDNAPMALVELLDRPEVEETENVQEAE.

Belongs to the bacterial ribosomal protein bL17 family. In terms of assembly, part of the 50S ribosomal subunit. Contacts protein L32.

This chain is Large ribosomal subunit protein bL17, found in Burkholderia mallei (strain NCTC 10229).